The chain runs to 138 residues: uncharacterized protein (138 aa).

Residues 19–40 traverse the membrane as a helical segment; sequence ECKVSVISFFLLAFLLMAHIWL. 3 consecutive repeat copies span residues 94–106, 107–119, and 120–132. Positions 94-132 are 3 X 13 AA tandem repeats of K-G-E-I-E-G-K-E-E-K-K-E-[GV]; sequence KGEIEGKEEKKEGKGEIEGKEEKKEGKGEIEGKEEKKEV. Positions 98–138 are disordered; that stretch reads EGKEEKKEGKGEIEGKEEKKEGKGEIEGKEEKKEVENGPRK.

As to expression, expressed in roots, leaves and flowers.

The protein localises to the mitochondrion membrane. Its function is as follows. Involved in cytoplasmic male sterility (CMS) by leading to pollen abortion. Not expressed in fertile (normal) plants. This is an uncharacterized protein from Raphanus sativus (Radish).